A 559-amino-acid polypeptide reads, in one-letter code: Chromatin assembly factor 1 subunit B (559 aa).

WD repeat units lie at residues 11-54 (HNKE…DGKA), 64-103 (RHTKAVNVVRFSPTGEILASGGDDAVILLWKVNDNKEPEQ), 127-166 (GHLEDVYDICWATDGNLMASASVDNTAIIWDVSKGQKISI), 169-208 (EHKSYVQGVTWDPLGQYVATLSCDRVLRVYSIQKKRVAFN), 228-279 (FHDD…RPIA), 299-340 (ELRP…PFGY), and 344-385 (IHYH…IPLK). The segment at 386-559 (EKPVLNMRTP…NKGGTESLDP (174 aa)) is disordered. Thr-394 is modified (phosphothreonine). The residue at position 409 (Ser-409) is a Phosphoserine. Thr-419 carries the post-translational modification Phosphothreonine. Phosphoserine is present on Ser-429. The segment covering 430 to 444 (PGTTPPQARQAPAPT) has biased composition (low complexity). Thr-433 bears the Phosphothreonine mark. A Phosphoserine modification is found at Ser-458. The segment covering 469 to 495 (LQPSSQNTKAHPSRRVTLNTLQAWSKT) has biased composition (polar residues). Lys-494 carries the N6-acetyllysine modification. Thr-495, Thr-509, Thr-521, and Thr-531 each carry phosphothreonine. The span at 509–526 (TPPSSVPTSVISTPSTEE) shows a compositional bias: low complexity. Ser-538 is subject to Phosphoserine. The span at 541–552 (ELKRPRLDENKG) shows a compositional bias: basic and acidic residues.

It belongs to the WD repeat HIR1 family. In terms of assembly, subunit of the CAF-1 complex that contains RBBP4, CHAF1B and CHAF1A. CHAF1A binds directly to CHAF1B. Only minor amounts of RBBP4 are complexed with CHAF1A and CHAF1B in G1 phase. In G2 and S phase also monomeric CHAF1B is detected. Interacts with histones H3.1, H3.2 and H3.1t. Differentially phosphorylated during cell cycle. During mitosis the p60 subunit of inactive CAF-1 is hyperphosphorylated and displaced into the cytosol. Progressivly dephosphorylated from G1 to S and G2 phase. Phosphorylated p60 is recruited to chromatin undergoing DNA repair after UV irradiation in G1, S or G2 phases.

It localises to the nucleus. It is found in the cytoplasm. In terms of biological role, acts as a component of the histone chaperone complex chromatin assembly factor 1 (CAF-1), which assembles histone octamers onto DNA during replication and repair. CAF-1 performs the first step of the nucleosome assembly process, bringing newly synthesized histones H3 and H4 to replicating DNA; histones H2A/H2B can bind to this chromatin precursor subsequent to DNA replication to complete the histone octamer. This Homo sapiens (Human) protein is Chromatin assembly factor 1 subunit B.